The sequence spans 433 residues: Bifunctional urease accessory protein UreEF (433 aa).

Residues 1 to 200 (MKIANTFIKR…VMATAASTAS (200 aa)) are urease accessory protein UreE. Residues 200-433 (SMTPSLDAGQ…ETQFSRLFRS (234 aa)) form a urease accessory protein UreF region.

The protein in the N-terminal section; belongs to the UreE family. This sequence in the C-terminal section; belongs to the UreF family. In terms of assembly, ureD, UreF and UreG form a complex that acts as a GTP-hydrolysis-dependent molecular chaperone, activating the urease apoprotein by helping to assemble the nickel containing metallocenter of UreC. The UreE protein probably delivers the nickel.

The protein localises to the cytoplasm. Functionally, involved in urease metallocenter assembly. Binds nickel. Probably functions as a nickel donor during metallocenter assembly. Required for maturation of urease via the functional incorporation of the urease nickel metallocenter. This is Bifunctional urease accessory protein UreEF (ureEF) from Bordetella bronchiseptica (Alcaligenes bronchisepticus).